Reading from the N-terminus, the 203-residue chain is uncharacterized protein (203 aa).

The tract at residues 174–203 (LASSKNPRARSPGLDPLGSSETLWSHRGGH) is disordered.

This is an uncharacterized protein from Homo sapiens (Human).